A 401-amino-acid polypeptide reads, in one-letter code: All trans-polyprenyl-diphosphate synthase PDSS2 (401 aa).

It belongs to the FPP/GGPP synthase family. As to quaternary structure, heterotetramer composed of 2 PDSS1/DPS1 and 2 PDSS2/DLP1 subunits.

It localises to the mitochondrion. It catalyses the reaction 7 isopentenyl diphosphate + (2E,6E)-farnesyl diphosphate = all-trans-decaprenyl diphosphate + 7 diphosphate. The enzyme catalyses 6 isopentenyl diphosphate + (2E,6E)-farnesyl diphosphate = all-trans-nonaprenyl diphosphate + 6 diphosphate. The protein operates within cofactor biosynthesis; ubiquinone biosynthesis. Heterotetrameric enzyme that catalyzes the condensation of farnesyl diphosphate (FPP), which acts as a primer, and isopentenyl diphosphate (IPP) to produce prenyl diphosphates of varying chain lengths and participates in the determination of the side chain of ubiquinone. Supplies nona and decaprenyl diphosphate, the precursors for the side chain of the isoprenoid quinones ubiquinone-9 (Q9) and ubiquinone-10 (Q10) respectively. The enzyme adds isopentenyl diphosphate molecules sequentially to farnesyl diphosphate with trans stereochemistry. May play a role during cerebellar development. May regulate mitochondrial respiratory chain function. This is All trans-polyprenyl-diphosphate synthase PDSS2 from Mus musculus (Mouse).